We begin with the raw amino-acid sequence, 202 residues long: Neuroligin-3 (202 aa).

At 1-202 the chain is on the extracellular side; sequence RYGSPTYFYA…TGTRMQGHSW (202 aa). Residues C15 and C49 are joined by a disulfide bond. N50 is a glycosylation site (N-linked (GlcNAc...) asparagine). The disordered stretch occupies residues 154–202; that stretch reads LRIPPTAPTSPAGPMARPGAPSGQPSHLPTATRMPRGPGTGTRMQGHSW.

Belongs to the type-B carboxylesterase/lipase family. Homodimer, and heterodimer with NLGN1 and NLGN2. Interacts with neurexins NRXN1, NRXN2 and NRXN3. Interaction with neurexins is mediated by heparan sulfate glycan modification on neurexin. Interacts (via its C-terminus) with DLG4/PSD-95 (via PDZ domain 3).

It localises to the cell membrane. It is found in the synapse. Cell surface protein involved in cell-cell-interactions via its interactions with neurexin family members. Plays a role in synapse function and synaptic signal transmission, and probably mediates its effects by recruiting and clustering other synaptic proteins. May promote the initial formation of synapses, but is not essential for this. May also play a role in glia-glia or glia-neuron interactions in the developing peripheral nervous system. The polypeptide is Neuroligin-3 (NLGN3) (Macaca mulatta (Rhesus macaque)).